Consider the following 3072-residue polypeptide: E1A-binding protein p400 (3072 aa).

Polar residues predominate over residues M1–G22. Disordered regions lie at residues M1 to Y55, P125 to V149, and L222 to Q250. Residues P31 to P40 are compositionally biased toward pro residues. Low complexity-rich tracts occupy residues F41–P53 and P125–T136. Phosphoserine is present on residues S52 and S134. Residues S315 and S321 each carry the phosphoserine modification. 3 disordered regions span residues S485–R519, M544–P601, and A635–K769. A compositionally biased stretch (low complexity) spans Q556 to Q569. Positions Y570–S583 are enriched in polar residues. Residues T586–S599 are compositionally biased toward pro residues. Low complexity-rich tracts occupy residues P646–L657, Q668–T682, and S695–G710. Composition is skewed to polar residues over residues N724–S741 and S754–G765. S735, S741, and S754 each carry phosphoserine. The HSA domain occupies L798–A870. Positions E914–L928 are enriched in basic and acidic residues. Disordered regions lie at residues E914 to E952 and F997 to S1024. T922 is modified (phosphothreonine). Residues S923, S927, and S940 each carry the phosphoserine modification. Residue T944 is modified to Phosphothreonine. Residues D950–Q1364 form an interactions with RUVBL1 and RUVBL2 region. S1009 and S1010 each carry phosphoserine. The Helicase ATP-binding domain occupies A1102–G1267. D1115–T1122 serves as a coordination point for ATP. Residues D1218 to Q1221 carry the DEAD box-like motif. The residue at position 1471 (K1471) is an N6-acetyllysine. The interval E1473–G1503 is disordered. Over residues A1488–G1499 the composition is skewed to polar residues. S1646 and S1650 each carry phosphoserine. The Helicase C-terminal domain occupies K1815 to T1972. Disordered regions lie at residues A2033–P2062 and K2203–V2227. A compositionally biased stretch (low complexity) spans G2043–S2053. Residues K2265 and K2272 each carry the N6-acetyllysine modification. The Myb-like domain maps to E2276–I2345. The interval K2440–T2699 is interaction with ZNF42. The segment at E2441–T2534 is disordered. 2 stretches are compositionally biased toward low complexity: residues A2446–P2455 and Q2463–Q2478. Positions Q2479–Q2493 are enriched in pro residues. Low complexity predominate over residues P2494 to Q2526. S2614 is subject to Phosphoserine. 2 disordered regions span residues Q2734–T2790 and A3028–Q3072. Over residues P2739–Q2754 the composition is skewed to pro residues. Low complexity predominate over residues P2755 to T2775. Residues P3042–K3053 are compositionally biased toward polar residues.

This sequence belongs to the SNF2/RAD54 helicase family. SWR1 subfamily. In terms of assembly, component of the NuA4 histone acetyltransferase complex which contains the catalytic subunit KAT5/TIP60 and the subunits EP400, TRRAP/PAF400, BRD8/SMAP, EPC1, DMAP1/DNMAP1, RUVBL1/TIP49, RUVBL2, ING3, actin, ACTL6A/BAF53A, MORF4L1/MRG15, MORF4L2/MRGX, MRGBP, YEATS4/GAS41, VPS72/YL1 and MEAF6. May also participate in the formation of NuA4 related complexes which lack the KAT5/TIP60 catalytic subunit, but which include the SWI/SNF related protein SRCAP. The NuA4 complex interacts with MYC. EP400 interacts with TRRAP, RUVBL1 and RUVBL2. Component of a SWR1-like complex. Interacts with ZNF42. Interacts with PHF5A. In terms of tissue distribution, expressed in brain, thymus, lung, liver, spleen, kidney, colon and bone marrow.

The protein resides in the nucleus. Component of the NuA4 histone acetyltransferase complex which is involved in transcriptional activation of select genes principally by acetylation of nucleosomal histones H4 and H2A. This modification may both alter nucleosome - DNA interactions and promote interaction of the modified histones with other proteins which positively regulate transcription. May be required for transcriptional activation of E2F1 and MYC target genes during cellular proliferation. The NuA4 complex ATPase and helicase activities seem to be, at least in part, contributed by the association of RUVBL1 and RUVBL2 with EP400. Component of a SWR1-like complex that specifically mediates the removal of histone H2A.Z/H2AZ1 from the nucleosome. Regulates transcriptional activity of ZNF42. This is E1A-binding protein p400 (Ep400) from Mus musculus (Mouse).